We begin with the raw amino-acid sequence, 305 residues long: Probable 5-dehydro-4-deoxyglucarate dehydratase (305 aa).

Belongs to the DapA family.

It carries out the reaction 5-dehydro-4-deoxy-D-glucarate + H(+) = 2,5-dioxopentanoate + CO2 + H2O. The protein operates within carbohydrate acid metabolism; D-glucarate degradation; 2,5-dioxopentanoate from D-glucarate: step 2/2. The polypeptide is Probable 5-dehydro-4-deoxyglucarate dehydratase (Xanthomonas campestris pv. campestris (strain 8004)).